A 241-amino-acid chain; its full sequence is tRNA (guanine-N(1)-)-methyltransferase (241 aa).

S-adenosyl-L-methionine contacts are provided by residues glycine 123 and 143–148; that span reads IGDYVL.

Belongs to the RNA methyltransferase TrmD family. In terms of assembly, homodimer.

Its subcellular location is the cytoplasm. It catalyses the reaction guanosine(37) in tRNA + S-adenosyl-L-methionine = N(1)-methylguanosine(37) in tRNA + S-adenosyl-L-homocysteine + H(+). Its function is as follows. Specifically methylates guanosine-37 in various tRNAs. This is tRNA (guanine-N(1)-)-methyltransferase from Roseobacter denitrificans (strain ATCC 33942 / OCh 114) (Erythrobacter sp. (strain OCh 114)).